Here is a 594-residue protein sequence, read N- to C-terminus: SHC-transforming protein 3 (594 aa).

Residues 98 to 147 form a disordered region; sequence GSCSAPSLAAPDGSAPSAPRAPAMSAARKGRPGDEPLPRPPRGAPHASDQ. The span at 101 to 124 shows a compositional bias: low complexity; that stretch reads SAPSLAAPDGSAPSAPRAPAMSAA. The PID domain maps to 149-334; it reads LGPGVTYVVK…LDEPWTEEEG (186 aa). Positions 335–498 are CH1; it reads DGSDHPYYNS…KMLEELQAET (164 aa). Disordered regions lie at residues 351 to 373 and 386 to 405; these read PPGG…AQFA and GDTF…SSDI. Over residues 393 to 405 the composition is skewed to polar residues; sequence WQQTPLRQGSSDI. Residue S402 is modified to Phosphoserine. The 92-residue stretch at 499 to 590 folds into the SH2 domain; that stretch reads WYQGEMSRKE…GSELCLQQPV (92 aa).

Interacts with the Trk receptors in a phosphotyrosine-dependent manner. Once activated, binds to GRB2. Interacts with activated EGF receptors. In terms of processing, tyrosine phosphorylated. Mainly expressed in brain. Hardly detectable in other tissues, except in pancreas. Highly expressed in the cerebral cortex, frontal and temporal lobes, occipital pole, hippocampus, caudate nucleus and amygdala. Expressed at low level in the cerebellum, medulla and spinal cord.

Its function is as follows. Signaling adapter that couples activated growth factor receptors to signaling pathway in neurons. Involved in the signal transduction pathways of neurotrophin-activated Trk receptors in cortical neurons. The sequence is that of SHC-transforming protein 3 (SHC3) from Homo sapiens (Human).